Reading from the N-terminus, the 113-residue chain is Putative pterin-4-alpha-carbinolamine dehydratase (113 aa).

Belongs to the pterin-4-alpha-carbinolamine dehydratase family.

The catalysed reaction is (4aS,6R)-4a-hydroxy-L-erythro-5,6,7,8-tetrahydrobiopterin = (6R)-L-erythro-6,7-dihydrobiopterin + H2O. This chain is Putative pterin-4-alpha-carbinolamine dehydratase, found in Rickettsia bellii (strain OSU 85-389).